A 928-amino-acid polypeptide reads, in one-letter code: 2-oxoglutarate dehydrogenase E1 component (928 aa).

This sequence belongs to the alpha-ketoglutarate dehydrogenase family. Homodimer. Part of the 2-oxoglutarate dehydrogenase (OGDH) complex composed of E1 (2-oxoglutarate dehydrogenase), E2 (dihydrolipoamide succinyltransferase) and E3 (dihydrolipoamide dehydrogenase); the complex contains multiple copies of the three enzymatic components (E1, E2 and E3). Thiamine diphosphate is required as a cofactor.

The enzyme catalyses N(6)-[(R)-lipoyl]-L-lysyl-[protein] + 2-oxoglutarate + H(+) = N(6)-[(R)-S(8)-succinyldihydrolipoyl]-L-lysyl-[protein] + CO2. E1 component of the 2-oxoglutarate dehydrogenase (OGDH) complex which catalyzes the decarboxylation of 2-oxoglutarate, the first step in the conversion of 2-oxoglutarate to succinyl-CoA and CO(2). This chain is 2-oxoglutarate dehydrogenase E1 component (sucA), found in Rickettsia conorii (strain ATCC VR-613 / Malish 7).